A 223-amino-acid polypeptide reads, in one-letter code: Glycoprotein 42 (223 aa).

The Intravirion portion of the chain corresponds to 1-8 (MVSFKQVR). A helical transmembrane segment spans residues 9-29 (VPLFTAIALVIVLLLAYFLPP). Residues 30–223 (RVRGGGRVAA…CLCVSQRSNS (194 aa)) lie on the Virion surface side of the membrane. Disulfide bonds link Cys99-Cys138, Cys102-Cys115, Cys128-Cys214, Cys132-Cys216, and Cys192-Cys208. The region spanning 111–217 (YKGCCFYFTK…CSFLKPCLCV (107 aa)) is the C-type lectin domain.

It belongs to the epstein barr virus gp42 family. Forms a complex with gp25 and gp85 via its N-terminus; this complex is used for invasion of B-lymphocytes. Interacts with human HLA-DRA and HLA-DRB1.

It localises to the virion membrane. It is found in the host membrane. Functionally, plays a role in virion attachment to host B-lymphocytes, through binding to leukocyte antigen (HLA) class II and subsequently participates in fusion of the virion with host membranes. May act as a tropism switch that directs fusion with B-lymphocytes and inhibits fusion with epithelial cells. Additionally, hampers T-cell recognition via HLA class II molecules through steric hindrance of T-cell receptor-class II-peptide interaction. Its function is as follows. Soluble gp42 inhibits HLA class II-restricted antigen presentation to T-cells through binding to immature and mature HLA class II complexes. The protein is Glycoprotein 42 of Epstein-Barr virus (strain B95-8) (HHV-4).